Consider the following 269-residue polypeptide: Putative phosphoenolpyruvate synthase regulatory protein (269 aa).

149–156 contacts ADP; that stretch reads GVSRSGKT.

It belongs to the pyruvate, phosphate/water dikinase regulatory protein family. PSRP subfamily.

It catalyses the reaction [pyruvate, water dikinase] + ADP = [pyruvate, water dikinase]-phosphate + AMP + H(+). It carries out the reaction [pyruvate, water dikinase]-phosphate + phosphate + H(+) = [pyruvate, water dikinase] + diphosphate. Functionally, bifunctional serine/threonine kinase and phosphorylase involved in the regulation of the phosphoenolpyruvate synthase (PEPS) by catalyzing its phosphorylation/dephosphorylation. The sequence is that of Putative phosphoenolpyruvate synthase regulatory protein from Pseudoalteromonas translucida (strain TAC 125).